The chain runs to 482 residues: UDP-N-acetylmuramate--L-alanine ligase (482 aa).

119–125 (GTHGKTT) serves as a coordination point for ATP.

It belongs to the MurCDEF family.

Its subcellular location is the cytoplasm. The enzyme catalyses UDP-N-acetyl-alpha-D-muramate + L-alanine + ATP = UDP-N-acetyl-alpha-D-muramoyl-L-alanine + ADP + phosphate + H(+). It functions in the pathway cell wall biogenesis; peptidoglycan biosynthesis. In terms of biological role, cell wall formation. This Cyanothece sp. (strain PCC 7425 / ATCC 29141) protein is UDP-N-acetylmuramate--L-alanine ligase.